The primary structure comprises 311 residues: Ribosomal RNA small subunit methyltransferase H (311 aa).

Residues 33–35 (GGH), aspartate 53, phenylalanine 77, aspartate 98, and glutamine 105 each bind S-adenosyl-L-methionine.

The protein belongs to the methyltransferase superfamily. RsmH family.

The protein localises to the cytoplasm. It carries out the reaction cytidine(1402) in 16S rRNA + S-adenosyl-L-methionine = N(4)-methylcytidine(1402) in 16S rRNA + S-adenosyl-L-homocysteine + H(+). In terms of biological role, specifically methylates the N4 position of cytidine in position 1402 (C1402) of 16S rRNA. This chain is Ribosomal RNA small subunit methyltransferase H, found in Thiobacillus denitrificans (strain ATCC 25259 / T1).